Consider the following 642-residue polypeptide: Zinc finger protein 14 (642 aa).

A KRAB domain is found at 4–76; it reads VSFEDVAVNF…MVERLCESRK (73 aa). The disordered stretch occupies residues 77-99; the sequence is GSKCGETTSQMPNVNINKETSTG. Polar residues predominate over residues 81 to 99; it reads GETTSQMPNVNINKETSTG. A C2H2-type 1 zinc finger spans residues 103–125; sequence HECSFCGKDFMHHSSLNRHMRSH. The segment at 141–163 adopts a C2H2-type 2; degenerate zinc-finger fold; sequence CKRKAVGKTFSYRHCVRKHERTH. The segment at 169–191 adopts a C2H2-type 3 zinc-finger fold; that stretch reads YECKQCGKAFIYYQPFQRHERIH. Residues 197–217 form a C2H2-type 4; atypical zinc finger; sequence YECKQCGKTFIYYQSFQKHAH. 15 consecutive C2H2-type zinc fingers follow at residues 223 to 245, 251 to 273, 279 to 301, 307 to 329, 335 to 357, 363 to 385, 391 to 413, 419 to 441, 447 to 469, 475 to 497, 503 to 525, 531 to 553, 559 to 581, 587 to 609, and 615 to 637; these read YECK…ERTH, YKCK…KRTH, YECK…VITH, YKCK…ERTH, YECK…ETTH, YECK…ERSH, YECK…EKIH, FECK…ERTH, YQCK…ERTH, and YRCK…ERSH.

It belongs to the krueppel C2H2-type zinc-finger protein family.

It localises to the nucleus. Its function is as follows. May be involved in transcriptional regulation. The polypeptide is Zinc finger protein 14 (ZNF14) (Macaca fascicularis (Crab-eating macaque)).